The sequence spans 344 residues: Heat-inducible transcription repressor HrcA (344 aa).

It belongs to the HrcA family.

Its function is as follows. Negative regulator of class I heat shock genes (grpE-dnaK-dnaJ and groELS operons). Prevents heat-shock induction of these operons. The protein is Heat-inducible transcription repressor HrcA of Aster yellows witches'-broom phytoplasma (strain AYWB).